The sequence spans 776 residues: MYRLNIVSTNPSGSVQQQQQAQGQQVISSVVRPQQQQPPPQLALVQTGGSGGTTTTIIGLTSLNALNATTITGLVAGAAGSSTSAIAAAGASNSGSGPSTATTKHILKAATTNNNISIVKIVDDIMLKAVKVEPLPMDTGGGGGGVSMIPSSATTSGGVTVTAIPASVAPMPPVAAGTNVSSNGSVTVYASGKRRLESNEEWISSPSPGSVPGSAPPLSPSPGSQSTTYTTTMSNGYSSPMSTGSYDPYSPNGKMGREDLSPSSSLNGYTDGSDAKKQKKGPTPRQQEELCLVCGDRESGYHYNALTCEGCKGFFRRSVTKNAVYCCKFGHACEMDMYMRRKCQECRLKKCLAVGMRPECVVPENQCAIKRKEKKAQKEKDKVQTNATVSTTNSTYRSEILPILMKCDPPPHQAIPLLPEKLLQENRLRNIPLLTANQMAVIYKLIWYQDGYEQPSEEDLKRIMIGSPNEEEDQHDVHFRHITEITILTVQLIVEFAKGLPAFTKIPQEDQITLLKACSSEVMMLRMARRYDAATDSILFANNRSYTRDSYRMAGMADTIEDLLHFCRQMFSLTVDNVEYALLTAIVIFSDRPGLEQAELVEHIQSYYIDTLRIYILNRHAGDPKCSVIFAKLLSILTELRTLGNQNSEMCFSLKLKNRKLPRFLEEIWDVQDIPPSMQAQMHSHGTQSSSSSSSSSSSSSNGSSNGNSSSNSNSSQHGPHPHPHGQQLTPNQQQHQQQHSQLQQVHANGSGSGGGSNNNSSSGGVVPGLGMLDQV.

Residues 1-290 (MYRLNIVSTN…GPTPRQQEEL (290 aa)) form a modulating region. Residues 199 to 283 (NEEWISSPSP…DAKKQKKGPT (85 aa)) are disordered. Over residues 204-213 (SSPSPGSVPG) the composition is skewed to low complexity. 2 stretches are compositionally biased toward polar residues: residues 227-245 (TTYT…STGS) and 261-270 (SPSSSLNGYT). Residues 288-363 (EELCLVCGDR…VGMRPECVVP (76 aa)) constitute a DNA-binding region (nuclear receptor). 2 consecutive NR C4-type zinc fingers follow at residues 291 to 311 (CLVC…CEGC) and 327 to 346 (CKFG…CQEC). The region spanning 437–673 (NQMAVIYKLI…FLEEIWDVQD (237 aa)) is the NR LBD domain. The segment covering 679–688 (QAQMHSHGTQ) has biased composition (polar residues). Residues 679 to 776 (QAQMHSHGTQ…VPGLGMLDQV (98 aa)) form a disordered region. A compositionally biased stretch (low complexity) spans 689-745 (SSSSSSSSSSSSSNGSSNGNSSSNSNSSQHGPHPHPHGQQLTPNQQQHQQQHSQLQQ).

The protein belongs to the nuclear hormone receptor family. NR1 subfamily. Heterodimer of USP and ECR. Only the heterodimer is capable of high-affinity binding to ecdysone. As to expression, a peak level expression is seen in the fat body of previtellogenic female mosquitos at one and two days after eclosion, levels fall three-fold at three days posteclosion.

It localises to the nucleus. Receptor for ecdysone. Binds to ecdysone response elements (ECRES). This chain is Ecdysone receptor (EcR), found in Aedes aegypti (Yellowfever mosquito).